Consider the following 134-residue polypeptide: Ribonuclease VapC11 (134 aa).

The PINc domain maps to 2–126 (ILIDTSAWVE…ADFDVIARIT (125 aa)). The Mg(2+) site is built by aspartate 5 and aspartate 98.

Belongs to the PINc/VapC protein family. The cofactor is Mg(2+).

In terms of biological role, toxic component of a type II toxin-antitoxin (TA) system. Acts as an RNase. Its toxic effects on cell growth and colony formation are neutralized by coexpression with cognate antitoxin VapB11. In Mycobacterium tuberculosis (strain CDC 1551 / Oshkosh), this protein is Ribonuclease VapC11.